The chain runs to 249 residues: Triosephosphate isomerase (249 aa).

8–10 (NWK) is a substrate binding site. Catalysis depends on H95, which acts as the Electrophile. E163 serves as the catalytic Proton acceptor. Residues G169 and S209 each coordinate substrate.

This sequence belongs to the triosephosphate isomerase family. In terms of assembly, homodimer.

It is found in the cytoplasm. The catalysed reaction is D-glyceraldehyde 3-phosphate = dihydroxyacetone phosphate. Its pathway is carbohydrate biosynthesis; gluconeogenesis. It participates in carbohydrate degradation; glycolysis; D-glyceraldehyde 3-phosphate from glycerone phosphate: step 1/1. In terms of biological role, involved in the gluconeogenesis. Catalyzes stereospecifically the conversion of dihydroxyacetone phosphate (DHAP) to D-glyceraldehyde-3-phosphate (G3P). This chain is Triosephosphate isomerase, found in Orientia tsutsugamushi (strain Ikeda) (Rickettsia tsutsugamushi).